Reading from the N-terminus, the 279-residue chain is Very long chain fatty acid elongase 2 (279 aa).

7 helical membrane passes run 12 to 32, 50 to 70, 98 to 118, 136 to 156, 158 to 178, 188 to 208, and 213 to 233; these read WFLLDSYLPTFTLTIVYLLSI, ILTLYNLGITLLSAYMLVELV, VLWWYYFSKLVEFLDTIFFVL, MFNIWWCVLNWIPCGQSFFGP, LNSFIHILMYSYYGLSVFPSM, LTQAQLVQFVLTITHTLSAVV, and FPFGCLIFQSSYMMTLVILFL. The Di-lysine motif signature appears at 276–279; the sequence is KKVQ.

This sequence belongs to the ELO family. ELOVL2 subfamily. As to quaternary structure, interacts with TECR.

The protein localises to the endoplasmic reticulum membrane. It carries out the reaction a very-long-chain acyl-CoA + malonyl-CoA + H(+) = a very-long-chain 3-oxoacyl-CoA + CO2 + CoA. The catalysed reaction is (7Z,10Z,13Z,16Z,19Z)-docosapentaenoyl-CoA + malonyl-CoA + H(+) = (9Z,12Z,15Z,18Z,21Z)-3-oxotetracosapentaenoyl-CoA + CO2 + CoA. It catalyses the reaction (5Z,8Z,11Z,14Z,17Z)-eicosapentaenoyl-CoA + malonyl-CoA + H(+) = 3-oxo-(7Z,10Z,13Z,16Z,19Z)-docosapentaenoyl-CoA + CO2 + CoA. The enzyme catalyses (5Z,8Z,11Z,14Z)-eicosatetraenoyl-CoA + malonyl-CoA + H(+) = (7Z,10Z,13Z,16Z)-3-oxodocosatetraenoyl-CoA + CO2 + CoA. It carries out the reaction (7Z,10Z,13Z,16Z)-docosatetraenoyl-CoA + malonyl-CoA + H(+) = (9Z,12Z,15Z,18Z)-3-oxotetracosatetraenoyl-CoA + CO2 + CoA. It functions in the pathway lipid metabolism; polyunsaturated fatty acid biosynthesis. Its function is as follows. Catalyzes the first and rate-limiting reaction of the four reactions that constitute the long-chain fatty acids elongation cycle. This endoplasmic reticulum-bound enzymatic process allows the addition of 2 carbons to the chain of long- and very long-chain fatty acids (VLCFAs) per cycle. Condensing enzyme that catalyzes the synthesis of polyunsaturated very long chain fatty acid (C20- and C22-PUFA), acting specifically toward polyunsaturated acyl-CoA with the higher activity toward C20:4(n-6) acyl-CoA. May participate in the production of polyunsaturated VLCFAs of different chain lengths that are involved in multiple biological processes as precursors of membrane lipids and lipid mediators. The chain is Very long chain fatty acid elongase 2 from Rattus norvegicus (Rat).